The primary structure comprises 375 residues: Chaperone protein DnaJ (375 aa).

A J domain is found at 5–70 (DYYEVLGVER…GKRSAYDQYG (66 aa)). The CR-type zinc-finger motif lies at 134 to 212 (GTTVTIRVPT…CHGQGRVEES (79 aa)). Zn(2+) is bound by residues Cys-147, Cys-150, Cys-164, Cys-167, Cys-186, Cys-189, Cys-200, and Cys-203. CXXCXGXG motif repeat units lie at residues 147 to 154 (CKTCDGTG), 164 to 171 (CTTCGGIG), 186 to 193 (CPRCHGSG), and 200 to 207 (CGSCHGQG).

The protein belongs to the DnaJ family. As to quaternary structure, homodimer. The cofactor is Zn(2+).

It localises to the cytoplasm. Participates actively in the response to hyperosmotic and heat shock by preventing the aggregation of stress-denatured proteins and by disaggregating proteins, also in an autonomous, DnaK-independent fashion. Unfolded proteins bind initially to DnaJ; upon interaction with the DnaJ-bound protein, DnaK hydrolyzes its bound ATP, resulting in the formation of a stable complex. GrpE releases ADP from DnaK; ATP binding to DnaK triggers the release of the substrate protein, thus completing the reaction cycle. Several rounds of ATP-dependent interactions between DnaJ, DnaK and GrpE are required for fully efficient folding. Also involved, together with DnaK and GrpE, in the DNA replication of plasmids through activation of initiation proteins. This is Chaperone protein DnaJ from Ectopseudomonas mendocina (strain ymp) (Pseudomonas mendocina).